The primary structure comprises 52 residues: ATP synthase F(1) complex subunit epsilon, mitochondrial (52 aa).

N6-acetyllysine; alternate is present on residues K21, K32, and K37. N6-succinyllysine; alternate is present on residues K21, K32, and K37. At K44 the chain carries N6-acetyllysine.

Belongs to the eukaryotic ATPase epsilon family. In terms of assembly, component of the ATP synthase complex composed at least of ATP5F1A/subunit alpha, ATP5F1B/subunit beta, ATP5MC1/subunit c (homooctomer), MT-ATP6/subunit a, MT-ATP8/subunit 8, ATP5ME/subunit e, ATP5MF/subunit f, ATP5MG/subunit g, ATP5MK/subunit k, ATP5MJ/subunit j, ATP5F1C/subunit gamma, ATP5F1D/subunit delta, ATP5F1E/subunit epsilon, ATP5PF/subunit F6, ATP5PB/subunit b, ATP5PD/subunit d, ATP5PO/subunit OSCP. ATP synthase complex consists of a soluble F(1) head domain (subunits alpha(3) and beta(3)) - the catalytic core - and a membrane F(0) domain - the membrane proton channel (subunits c, a, 8, e, f, g, k and j). These two domains are linked by a central stalk (subunits gamma, delta, and epsilon) rotating inside the F1 region and a stationary peripheral stalk (subunits F6, b, d, and OSCP).

It localises to the mitochondrion. The protein resides in the mitochondrion inner membrane. Functionally, subunit epsilon, of the mitochondrial membrane ATP synthase complex (F(1)F(0) ATP synthase or Complex V) that produces ATP from ADP in the presence of a proton gradient across the membrane which is generated by electron transport complexes of the respiratory chain. ATP synthase complex consist of a soluble F(1) head domain - the catalytic core - and a membrane F(1) domain - the membrane proton channel. These two domains are linked by a central stalk rotating inside the F(1) region and a stationary peripheral stalk. During catalysis, ATP synthesis in the catalytic domain of F(1) is coupled via a rotary mechanism of the central stalk subunits to proton translocation. In vivo, can only synthesize ATP although its ATP hydrolase activity can be activated artificially in vitro. May be essential for the assembly of F(1) and may play an important role in the incorporation of the hydrophobic subunit c into the F(1)-c oligomer rotor of the mitochondrial ATP synthase complex. This chain is ATP synthase F(1) complex subunit epsilon, mitochondrial, found in Mus musculus (Mouse).